A 542-amino-acid chain; its full sequence is Homeobox and leucine zipper protein Homez (542 aa).

A DNA-binding region (homeobox 1) is located at residues 55 to 114 (WTQAIQTSELDGNEHLLQAFSYFPYPSLADIALLCLRHGLQMEKVKTWFMAQRLRCGISW). Positions 165–193 (LSPLAPSEQPTHMKGLKVEPEEPSQVSQL) are disordered. Glycyl lysine isopeptide (Lys-Gly) (interchain with G-Cter in SUMO2) cross-links involve residues Lys181 and Lys201. The interval 250–307 (VHQPDKPASVSLLDNSCKEESEPSGIPPSSSTSSPSFQALANGTTATPKPLQPLGCIS) is disordered. Positions 272–285 (PSGIPPSSSTSSPS) are enriched in low complexity. Residues 286–296 (FQALANGTTAT) are compositionally biased toward polar residues. Position 345 is a phosphoserine (Ser345). DNA-binding regions (homeobox) lie at residues 349–409 (QHQR…KHGQ) and 443–502 (TPPL…AEVV). A Nuclear localization signal motif is present at residues 352 to 357 (RKTKRK). Disordered regions lie at residues 424 to 454 (FQDPAIPTPSTRSLKEWAKTPPLPAPPPPPD) and 501 to 542 (VVVC…IIWD). Thr443 is subject to Phosphothreonine. Residues 444–454 (PPLPAPPPPPD) show a composition bias toward pro residues. Residues 505–542 (LDEEDEEDEEDELPEDGEEEEEEEEDDDDGDDDVIIWD) are compositionally biased toward acidic residues.

In terms of assembly, homodimer or heterodimer (Potential). Interacts with HOXC8. In terms of tissue distribution, ubiquitous. Strongly expressed in testis.

Its subcellular location is the nucleus. Its function is as follows. May function as a transcriptional regulator. The sequence is that of Homeobox and leucine zipper protein Homez (Homez) from Mus musculus (Mouse).